Here is a 214-residue protein sequence, read N- to C-terminus: UBX domain-containing protein 10 (214 aa).

The segment covering 1-13 (MHVTRPKSSKGRS) has biased composition (basic residues). The segment at 1-79 (MHVTRPKSSK…AYDRPPEEPV (79 aa)) is disordered. Residues 16-25 (MITNSSMIYT) are compositionally biased toward polar residues. A compositionally biased stretch (low complexity) spans 49-60 (SLRSRAILRRSS). The UBX domain occupies 127–204 (PEESDLLLAI…GVLNKSVLCI (78 aa)).

It belongs to the UBXN10 family.

The protein localises to the cell projection. The protein resides in the cilium. In terms of biological role, required for ciliogenesis. Acts as a tethering factor that facilitates recruitment of vcp/p97 to the intraflagellar transport complex B (IFT-B) in cilia. The sequence is that of UBX domain-containing protein 10 from Danio rerio (Zebrafish).